The chain runs to 517 residues: Glycerol kinase 5 (517 aa).

ATP-binding residues include serine 23 and threonine 24. The glycerol site is built by arginine 93, aspartate 270, and glutamine 271. Residues threonine 292, glycine 335, and glycine 432 each contribute to the ATP site.

Belongs to the FGGY kinase family.

The protein localises to the cytoplasm. The enzyme catalyses glycerol + ATP = sn-glycerol 3-phosphate + ADP + H(+). It participates in polyol metabolism; glycerol degradation via glycerol kinase pathway; sn-glycerol 3-phosphate from glycerol: step 1/1. Functionally, skin-specific kinase that plays a key role in glycerol metabolism, catalyzing its phosphorylation to produce sn-glycerol 3-phosphate. Involved in skin-specific regulation of sterol regulatory element-binding protein (SREBP) processing and lipid biosynthesis. The protein is Glycerol kinase 5 (GK5) of Gallus gallus (Chicken).